Here is a 485-residue protein sequence, read N- to C-terminus: Glutamyl-tRNA(Gln) amidotransferase subunit A (485 aa).

Residues K78 and S153 each act as charge relay system in the active site. The active-site Acyl-ester intermediate is S177.

Belongs to the amidase family. GatA subfamily. In terms of assembly, heterotrimer of A, B and C subunits.

It carries out the reaction L-glutamyl-tRNA(Gln) + L-glutamine + ATP + H2O = L-glutaminyl-tRNA(Gln) + L-glutamate + ADP + phosphate + H(+). Functionally, allows the formation of correctly charged Gln-tRNA(Gln) through the transamidation of misacylated Glu-tRNA(Gln) in organisms which lack glutaminyl-tRNA synthetase. The reaction takes place in the presence of glutamine and ATP through an activated gamma-phospho-Glu-tRNA(Gln). This is Glutamyl-tRNA(Gln) amidotransferase subunit A from Trichlorobacter lovleyi (strain ATCC BAA-1151 / DSM 17278 / SZ) (Geobacter lovleyi).